The sequence spans 120 residues: Large ribosomal subunit protein uL22 (120 aa).

This sequence belongs to the universal ribosomal protein uL22 family. As to quaternary structure, part of the 50S ribosomal subunit.

Its function is as follows. This protein binds specifically to 23S rRNA; its binding is stimulated by other ribosomal proteins, e.g. L4, L17, and L20. It is important during the early stages of 50S assembly. It makes multiple contacts with different domains of the 23S rRNA in the assembled 50S subunit and ribosome. In terms of biological role, the globular domain of the protein is located near the polypeptide exit tunnel on the outside of the subunit, while an extended beta-hairpin is found that lines the wall of the exit tunnel in the center of the 70S ribosome. The sequence is that of Large ribosomal subunit protein uL22 from Rippkaea orientalis (strain PCC 8801 / RF-1) (Cyanothece sp. (strain PCC 8801)).